A 270-amino-acid polypeptide reads, in one-letter code: Putative pyruvate, phosphate dikinase regulatory protein (270 aa).

151-158 contacts ADP; it reads GVSRTSKT.

Belongs to the pyruvate, phosphate/water dikinase regulatory protein family. PDRP subfamily.

It carries out the reaction N(tele)-phospho-L-histidyl/L-threonyl-[pyruvate, phosphate dikinase] + ADP = N(tele)-phospho-L-histidyl/O-phospho-L-threonyl-[pyruvate, phosphate dikinase] + AMP + H(+). The enzyme catalyses N(tele)-phospho-L-histidyl/O-phospho-L-threonyl-[pyruvate, phosphate dikinase] + phosphate + H(+) = N(tele)-phospho-L-histidyl/L-threonyl-[pyruvate, phosphate dikinase] + diphosphate. Its function is as follows. Bifunctional serine/threonine kinase and phosphorylase involved in the regulation of the pyruvate, phosphate dikinase (PPDK) by catalyzing its phosphorylation/dephosphorylation. This is Putative pyruvate, phosphate dikinase regulatory protein from Lysinibacillus sphaericus (strain C3-41).